The primary structure comprises 169 residues: Allophycocyanin subunit beta-18 (169 aa).

N4-methylasparagine is present on Asn-72. Cys-82 serves as a coordination point for (2R,3E)-phycocyanobilin.

It belongs to the phycobiliprotein family. As to quaternary structure, heterodimer of an alpha and a beta chain. Post-translationally, contains one covalently linked bilin chromophore.

It localises to the plastid. The protein resides in the chloroplast thylakoid membrane. In terms of biological role, light-harvesting photosynthetic bile pigment-protein from the phycobiliprotein complex. Allophycocyanin has a maximum absorption at approximately 650 nanometers. The protein is Allophycocyanin subunit beta-18 (apcF) of Porphyra purpurea (Red seaweed).